Reading from the N-terminus, the 70-residue chain is Small ribosomal subunit protein bS21 (70 aa).

Belongs to the bacterial ribosomal protein bS21 family.

This chain is Small ribosomal subunit protein bS21, found in Nitrosomonas eutropha (strain DSM 101675 / C91 / Nm57).